A 144-amino-acid chain; its full sequence is 3-dehydroquinate dehydratase (144 aa).

The Proton acceptor role is filled by Y24. N73, H79, and D86 together coordinate substrate. H99 functions as the Proton donor in the catalytic mechanism. Residues 100 to 101 (LS) and R110 each bind substrate.

This sequence belongs to the type-II 3-dehydroquinase family. As to quaternary structure, homododecamer.

The enzyme catalyses 3-dehydroquinate = 3-dehydroshikimate + H2O. Its pathway is metabolic intermediate biosynthesis; chorismate biosynthesis; chorismate from D-erythrose 4-phosphate and phosphoenolpyruvate: step 3/7. Its function is as follows. Catalyzes a trans-dehydration via an enolate intermediate. The chain is 3-dehydroquinate dehydratase from Shewanella sp. (strain ANA-3).